The following is a 185-amino-acid chain: Monothiol glutaredoxin-S4, mitochondrial (185 aa).

Residues 1–36 (MARLMSSALIRGLVRSSCSPTVAAVAQPTIHQFRNY) constitute a mitochondrion transit peptide. Positions 37 to 74 (SSGLGGDSTATGDSSSTRVAADPDTHQDFQPTTKSSNM) are disordered. Positions 43 to 53 (DSTATGDSSST) are enriched in low complexity. Positions 64 to 74 (DFQPTTKSSNM) are enriched in polar residues. The Glutaredoxin domain maps to 77 to 179 (DDIVSQDIKE…DVLGDIAQKR (103 aa)). K94 serves as a coordination point for glutathione. Residue C102 participates in [2Fe-2S] cluster binding. Glutathione contacts are provided by residues K131, F143, and 156 to 157 (SD).

It belongs to the glutaredoxin family. CGFS subfamily.

It localises to the mitochondrion. Its function is as follows. May only reduce GSH-thiol disulfides, but not protein disulfides. The protein is Monothiol glutaredoxin-S4, mitochondrial (GRXS4) of Oryza sativa subsp. japonica (Rice).